Here is a 522-residue protein sequence, read N- to C-terminus: Glutathione reductase, mitochondrial (522 aa).

The transit peptide at 1–43 (MALLPRALSSGGRPSWRRAARASRGFPLPLPFPAAATHALSRA) directs the protein to the mitochondrion. Positions 74 and 75 each coordinate FAD. Position 74 (S74) interacts with glutathione. R81 contacts glutathione. E94 provides a ligand contact to FAD. Residue K97 is modified to N6-acetyllysine. FAD contacts are provided by T101, C102, and K110. An intrachain disulfide couples C102 to C107. Y158 contacts glutathione. Residue A174 coordinates FAD. A239, I242, E245, R262, R268, and G334 together coordinate NADP(+). D375 is a binding site for FAD. Residue L381 participates in NADP(+) binding. FAD is bound at residue T383. Glutathione is bound at residue R391. Residue V414 participates in NADP(+) binding. H511 contributes to the FAD binding site. The Proton acceptor role is filled by H511.

The protein belongs to the class-I pyridine nucleotide-disulfide oxidoreductase family. In terms of assembly, homodimer; disulfide-linked. Requires FAD as cofactor.

Its subcellular location is the mitochondrion. The protein resides in the cytoplasm. It carries out the reaction 2 glutathione + NADP(+) = glutathione disulfide + NADPH + H(+). Catalyzes the reduction of glutathione disulfide (GSSG) to reduced glutathione (GSH). Constitutes the major mechanism to maintain a high GSH:GSSG ratio in the cytosol. The chain is Glutathione reductase, mitochondrial (GSR) from Callithrix jacchus (White-tufted-ear marmoset).